A 422-amino-acid polypeptide reads, in one-letter code: UDP-N-acetylmuramoylalanine--D-glutamate ligase (422 aa).

Residue 102 to 108 (GTNGKTT) participates in ATP binding.

It belongs to the MurCDEF family.

It is found in the cytoplasm. The enzyme catalyses UDP-N-acetyl-alpha-D-muramoyl-L-alanine + D-glutamate + ATP = UDP-N-acetyl-alpha-D-muramoyl-L-alanyl-D-glutamate + ADP + phosphate + H(+). Its pathway is cell wall biogenesis; peptidoglycan biosynthesis. Its function is as follows. Cell wall formation. Catalyzes the addition of glutamate to the nucleotide precursor UDP-N-acetylmuramoyl-L-alanine (UMA). The chain is UDP-N-acetylmuramoylalanine--D-glutamate ligase from Helicobacter pylori (strain HPAG1).